A 403-amino-acid chain; its full sequence is Imidazolonepropionase (403 aa).

His-68 and His-70 together coordinate Fe(3+). Zn(2+)-binding residues include His-68 and His-70. Arg-77, Tyr-140, and His-173 together coordinate 4-imidazolone-5-propanoate. Residue Tyr-140 participates in N-formimidoyl-L-glutamate binding. His-238 contributes to the Fe(3+) binding site. His-238 serves as a coordination point for Zn(2+). Position 241 (Gln-241) interacts with 4-imidazolone-5-propanoate. Asp-313 contacts Fe(3+). Asp-313 provides a ligand contact to Zn(2+). 2 residues coordinate N-formimidoyl-L-glutamate: Asn-315 and Gly-317. 4-imidazolone-5-propanoate is bound at residue Ser-318.

This sequence belongs to the metallo-dependent hydrolases superfamily. HutI family. The cofactor is Zn(2+). Requires Fe(3+) as cofactor.

The protein localises to the cytoplasm. The catalysed reaction is 4-imidazolone-5-propanoate + H2O = N-formimidoyl-L-glutamate. The protein operates within amino-acid degradation; L-histidine degradation into L-glutamate; N-formimidoyl-L-glutamate from L-histidine: step 3/3. In terms of biological role, catalyzes the hydrolytic cleavage of the carbon-nitrogen bond in imidazolone-5-propanoate to yield N-formimidoyl-L-glutamate. It is the third step in the universal histidine degradation pathway. The protein is Imidazolonepropionase of Hahella chejuensis (strain KCTC 2396).